The following is a 344-amino-acid chain: MRNPNEIVAEALAAIHGCPDLPSLEQIKAGYLGKSGQLTELLKSLGAMPADARKTAGARINEAKQAVEAALKIRREALQQAELDRQLAAETLDVTLPGRGLGTAGVHPVSRTLARIEALFHSIGFDVATGPEIETDFYNFTALNIPEDHPARAMHDTFYLRQNNAGGGELLRTHTSPVQIRHMQTHEPPLRIIAPGRVYRCDSDVTHTPMFHQIEGLWVDESVSFADLKGVLADFMRNFFERDDLAVRFRPSFFPFTEPSAEMDIGCVMCGGSGCRVCSHTGWLEVLGCGMVHPNVFRHVGVDAERFIGFAFGLGVERLAMLRYGVDDLRLFFENDLRFLKQFN.

E258 is a binding site for Mg(2+).

The protein belongs to the class-II aminoacyl-tRNA synthetase family. Phe-tRNA synthetase alpha subunit type 1 subfamily. In terms of assembly, tetramer of two alpha and two beta subunits. The cofactor is Mg(2+).

It is found in the cytoplasm. The enzyme catalyses tRNA(Phe) + L-phenylalanine + ATP = L-phenylalanyl-tRNA(Phe) + AMP + diphosphate + H(+). This Thiobacillus denitrificans (strain ATCC 25259 / T1) protein is Phenylalanine--tRNA ligase alpha subunit.